The sequence spans 470 residues: Syncoilin (470 aa).

A disordered region spans residues Met-1–Ala-43. The segment at Met-1–Ile-148 is head. The residue at position 32 (Ser-32) is a Phosphoserine. An IF rod domain is found at Ser-157–Ala-452. The tract at residues Val-158 to Leu-192 is coil 1A. Positions Arg-193–Leu-219 are linker 1. A coil 1b region spans residues Glu-220 to Ala-297. The tract at residues Pro-298–Leu-337 is linker 2. Position 314 is a phosphoserine (Ser-314). Positions Arg-338 to Leu-445 are coil 2. The interval Pro-446–Val-470 is disordered. The interval Pro-446–Val-470 is tail.

Belongs to the intermediate filament family. In terms of assembly, may link the dystrophin-associated glycoprotein complex (DAPC) to intracellular desmin (DES) filaments. Interacts with DES and DTNA. Detected strongly in skeletal muscle and heart and weakly in lung (at protein level). Highly expressed in skeletal muscle and lung and weakly in lung and testis.

The protein localises to the cytoplasm. The protein resides in the perinuclear region. Functionally, atypical type III intermediate filament (IF) protein that may play a supportive role in the efficient coupling of mechanical stress between the myofibril and fiber exterior. May facilitate lateral force transmission during skeletal muscle contraction. Does not form homofilaments nor heterofilaments with other IF proteins. The polypeptide is Syncoilin (Sync) (Mus musculus (Mouse)).